Consider the following 281-residue polypeptide: Small ribosomal subunit protein uS2 (281 aa).

A disordered region spans residues 233 to 281 (NKAEGEAAEQPMAAWEKELLTNEAPAEASAEAAAPAAAEGETAEAPKAE). The segment covering 255–275 (EAPAEASAEAAAPAAAEGETA) has biased composition (low complexity).

Belongs to the universal ribosomal protein uS2 family.

This Bifidobacterium longum (strain DJO10A) protein is Small ribosomal subunit protein uS2.